We begin with the raw amino-acid sequence, 1096 residues long: MPKRDDINSVLVIGSGPIVIGQAAEFDYSGTQACRVLREEGVRVILVNSNPATIMTDPGFADATYIEPITSEVLEKIIIKERPDAVLPTLGGQTALNAAIRLDELGILAKHGVELIGAKVEAIQKGEDRQLFKDLVIESGADVARSHVAKTLEQAVEFAEDLGYPLVIRPSFTMGGLGSGFAHTRQELERMVADGLQSSPTTEVLLEESILGWKEYELELMRDTADNTVVVCSIENVDPVGVHTGDSITVAPALTLTDREYQHMRDIGIDIIRRVGVDTGGCNIQFAVDPTNGRLIVIEMNPRVSRSSALASKATGFPIAKIAAKLAIGYRLDEIPNDITKVTPASFEPTLDYVVVKVPRFAFEKFPAADAELTTTMKSVGEAMAIGRNYSTALQKALRSLEKRGSSFHWGAESRSVEELLETSRIPTDGRIVTVQQALRAGATPEQVFDATKIDPWFIDQIVLINEVADAVRDADELDAPTLREAKDHGFSDAQIAEIRGIGEQEVRDARHAAGIRPVFKTVDTCAGEFPALTPYHYSSYDSETEIVPSDRRKVIILGSGPNRIGQGIEFDYSCVHASFALADAGFETIMINCNPETVSTDYDTSDRLYFEPLTLEDVLEIVHVEQQAGELVGVVVQLGGQTALGLAKGLEAAGVPILGTSPSAIDLAEERGLFSGILDAAGLVAPRNGTAVAIDEAVVVAEEIGYPVLVRPSYVLGGRGMEIVFDTATLHDYFLRMADQGIIGEGKPLLIDRFLDDAIEIDIDAIYDGTELYVGGVMEHIEEAGIHSGDSSCTLPPVTLGRGQIQQVVDATRAIAEGVGVRGLLNVQFAIGAGVLYVLEANPRASRTVPFVSKALGIPLAKAASLVMVGTSIAELKASGLLPERDGSDVPMDSPVAVKEAVLPFKRFRTKDGLIVDSVLGPEMRSTGEVMGIDRDFPRAFAKSQEAAFGGLPLSGTVFVSVADRDKRSIVLPVLRLQQLGFEVLATAGTAEILSRNGIQARVVRKYSEEPAAGDSPSIVDLINRDEVDVVINTPSGRTARADGYEIRAAAVAADKPLFTTIAQLTAAVASFDAIRAGFDVTSLQDYAIAREARR.

Residues 1-402 (MPKRDDINSV…ALQKALRSLE (402 aa)) are carboxyphosphate synthetic domain. ATP-binding residues include arginine 129, arginine 169, glycine 175, glycine 176, glutamate 208, isoleucine 210, glutamate 215, glycine 241, valine 242, histidine 243, glutamine 285, and glutamate 299. In terms of domain architecture, ATP-grasp 1 spans 133-328 (KDLVIESGAD…IAKIAAKLAI (196 aa)). Mg(2+) contacts are provided by glutamine 285, glutamate 299, and asparagine 301. 3 residues coordinate Mn(2+): glutamine 285, glutamate 299, and asparagine 301. The oligomerization domain stretch occupies residues 403–547 (KRGSSFHWGA…YSSYDSETEI (145 aa)). Residues 548-950 (VPSDRRKVII…AFAKSQEAAF (403 aa)) form a carbamoyl phosphate synthetic domain region. Residues 676 to 870 (SGILDAAGLV…LAKAASLVMV (195 aa)) enclose the ATP-grasp 2 domain. Residues arginine 712, arginine 754, leucine 756, glutamate 761, glycine 786, isoleucine 787, histidine 788, serine 789, glutamine 829, and glutamate 841 each contribute to the ATP site. Mg(2+)-binding residues include glutamine 829, glutamate 841, and asparagine 843. Mn(2+)-binding residues include glutamine 829, glutamate 841, and asparagine 843. The MGS-like domain occupies 951–1095 (GGLPLSGTVF…QDYAIAREAR (145 aa)). The allosteric domain stretch occupies residues 951-1096 (GGLPLSGTVF…DYAIAREARR (146 aa)).

It belongs to the CarB family. In terms of assembly, composed of two chains; the small (or glutamine) chain promotes the hydrolysis of glutamine to ammonia, which is used by the large (or ammonia) chain to synthesize carbamoyl phosphate. Tetramer of heterodimers (alpha,beta)4. Requires Mg(2+) as cofactor. Mn(2+) serves as cofactor.

It carries out the reaction hydrogencarbonate + L-glutamine + 2 ATP + H2O = carbamoyl phosphate + L-glutamate + 2 ADP + phosphate + 2 H(+). The enzyme catalyses hydrogencarbonate + NH4(+) + 2 ATP = carbamoyl phosphate + 2 ADP + phosphate + 2 H(+). The protein operates within amino-acid biosynthesis; L-arginine biosynthesis; carbamoyl phosphate from bicarbonate: step 1/1. It participates in pyrimidine metabolism; UMP biosynthesis via de novo pathway; (S)-dihydroorotate from bicarbonate: step 1/3. Its function is as follows. Large subunit of the glutamine-dependent carbamoyl phosphate synthetase (CPSase). CPSase catalyzes the formation of carbamoyl phosphate from the ammonia moiety of glutamine, carbonate, and phosphate donated by ATP, constituting the first step of 2 biosynthetic pathways, one leading to arginine and/or urea and the other to pyrimidine nucleotides. The large subunit (synthetase) binds the substrates ammonia (free or transferred from glutamine from the small subunit), hydrogencarbonate and ATP and carries out an ATP-coupled ligase reaction, activating hydrogencarbonate by forming carboxy phosphate which reacts with ammonia to form carbamoyl phosphate. The protein is Carbamoyl phosphate synthase large chain of Clavibacter sepedonicus (Clavibacter michiganensis subsp. sepedonicus).